Here is a 245-residue protein sequence, read N- to C-terminus: Flavin mononucleotide hydrolase 1, chloroplatic (245 aa).

The N-terminal 26 residues, 1–26 (MAAAAMHTSAEFINLKPNMWKKNPVR), are a transit peptide targeting the chloroplast.

It belongs to the HAD-like hydrolase superfamily. DOG/GPP family. As to quaternary structure, homodimer. It depends on Mg(2+) as a cofactor.

It localises to the plastid. Its subcellular location is the chloroplast stroma. The enzyme catalyses FMN + H2O = riboflavin + phosphate. It catalyses the reaction 5-amino-6-(5-phospho-D-ribitylamino)uracil + H2O = 5-amino-6-(D-ribitylamino)uracil + phosphate. FMN hydrolase that catalyzes the dephosphorylation of flavin mononucleotide (FMN) to riboflavin. Can also dephosphorylate 5-amino-6-(5-phospho-D-ribitylamino)uracil, also known as ARPP. Not required for riboflavin biosynthesis in planta, but may help maintaining flavin homeostasis within chloroplasts. The chain is Flavin mononucleotide hydrolase 1, chloroplatic from Arabidopsis thaliana (Mouse-ear cress).